Reading from the N-terminus, the 344-residue chain is Phenylalanine--tRNA ligase alpha subunit (344 aa).

A Mg(2+)-binding site is contributed by Glu-256.

Belongs to the class-II aminoacyl-tRNA synthetase family. Phe-tRNA synthetase alpha subunit type 1 subfamily. Tetramer of two alpha and two beta subunits. Requires Mg(2+) as cofactor.

It localises to the cytoplasm. The catalysed reaction is tRNA(Phe) + L-phenylalanine + ATP = L-phenylalanyl-tRNA(Phe) + AMP + diphosphate + H(+). The protein is Phenylalanine--tRNA ligase alpha subunit of Oceanobacillus iheyensis (strain DSM 14371 / CIP 107618 / JCM 11309 / KCTC 3954 / HTE831).